Reading from the N-terminus, the 188-residue chain is Large ribosomal subunit protein uL6 (188 aa).

It belongs to the universal ribosomal protein uL6 family. Part of the 50S ribosomal subunit.

In terms of biological role, this protein binds to the 23S rRNA, and is important in its secondary structure. It is located near the subunit interface in the base of the L7/L12 stalk, and near the tRNA binding site of the peptidyltransferase center. In Myxococcus xanthus (strain DK1622), this protein is Large ribosomal subunit protein uL6.